Reading from the N-terminus, the 342-residue chain is tRNA N6-adenosine threonylcarbamoyltransferase (342 aa).

His-111 and His-115 together coordinate Fe cation. Residues 134 to 138, Asp-167, Gly-180, and Asn-272 each bind substrate; that span reads LVSGG. Residue Asp-300 coordinates Fe cation.

Belongs to the KAE1 / TsaD family. Requires Fe(2+) as cofactor.

Its subcellular location is the cytoplasm. The enzyme catalyses L-threonylcarbamoyladenylate + adenosine(37) in tRNA = N(6)-L-threonylcarbamoyladenosine(37) in tRNA + AMP + H(+). Required for the formation of a threonylcarbamoyl group on adenosine at position 37 (t(6)A37) in tRNAs that read codons beginning with adenine. Is involved in the transfer of the threonylcarbamoyl moiety of threonylcarbamoyl-AMP (TC-AMP) to the N6 group of A37, together with TsaE and TsaB. TsaD likely plays a direct catalytic role in this reaction. In Aromatoleum aromaticum (strain DSM 19018 / LMG 30748 / EbN1) (Azoarcus sp. (strain EbN1)), this protein is tRNA N6-adenosine threonylcarbamoyltransferase.